A 186-amino-acid chain; its full sequence is Ribosome-recycling factor (186 aa).

This sequence belongs to the RRF family.

The protein resides in the cytoplasm. Responsible for the release of ribosomes from messenger RNA at the termination of protein biosynthesis. May increase the efficiency of translation by recycling ribosomes from one round of translation to another. This chain is Ribosome-recycling factor, found in Beijerinckia indica subsp. indica (strain ATCC 9039 / DSM 1715 / NCIMB 8712).